Reading from the N-terminus, the 117-residue chain is UPF0295 protein GTNG_0491 (117 aa).

2 helical membrane passes run 12-32 (IRTF…LGLF) and 42-62 (LFMV…FWIG).

It belongs to the UPF0295 family.

Its subcellular location is the cell membrane. This chain is UPF0295 protein GTNG_0491, found in Geobacillus thermodenitrificans (strain NG80-2).